The primary structure comprises 315 residues: L-lactate dehydrogenase (315 aa).

Valine 14, aspartate 35, and tyrosine 66 together coordinate NAD(+). Substrate contacts are provided by residues glutamine 83, arginine 89, and 121–124 (NPVD). Residues 119 to 121 (VAN) and serine 144 each bind NAD(+). 149 to 152 (DTAR) is a binding site for substrate. The active-site Proton acceptor is histidine 176. At tyrosine 221 the chain carries Phosphotyrosine. A substrate-binding site is contributed by threonine 230.

Belongs to the LDH/MDH superfamily. LDH family. As to quaternary structure, homotetramer.

It is found in the cytoplasm. The enzyme catalyses (S)-lactate + NAD(+) = pyruvate + NADH + H(+). Its pathway is fermentation; pyruvate fermentation to lactate; (S)-lactate from pyruvate: step 1/1. In terms of biological role, catalyzes the conversion of lactate to pyruvate. The chain is L-lactate dehydrogenase from Mesomycoplasma hyopneumoniae (strain 232) (Mycoplasma hyopneumoniae).